Reading from the N-terminus, the 572-residue chain is 2-hydroxyacyl-CoA lyase (572 aa).

Residue Ala2 is modified to N-acetylalanine. Residue Glu58 participates in thiamine diphosphate binding. The interval 407-488 (TMDVGRSVLV…IIVFNNGGVY (82 aa)) is thiamine pyrophosphate binding. Mg(2+)-binding residues include Asp457 and Asn484.

Belongs to the TPP enzyme family. As to quaternary structure, homotetramer. Mg(2+) is required as a cofactor. Thiamine diphosphate serves as cofactor.

It catalyses the reaction an (R)-2-hydroxy-long-chain-fatty acyl-CoA = a long-chain fatty aldehyde + formyl-CoA. The enzyme catalyses a 2-hydroxy-3-methyl fatty acyl-CoA = a 2-methyl-branched fatty aldehyde + formyl-CoA. Functionally, catalyzes a carbon-carbon cleavage reaction; cleaves a 2-hydroxy-3-methylacyl-CoA into formyl-CoA and a 2-methyl-branched fatty aldehyde. The chain is 2-hydroxyacyl-CoA lyase (HACL) from Arabidopsis thaliana (Mouse-ear cress).